Reading from the N-terminus, the 162-residue chain is Small ribosomal subunit protein uS7m (162 aa).

The protein belongs to the universal ribosomal protein uS7 family. Part of the small ribosomal subunit.

It is found in the mitochondrion. In terms of biological role, one of the primary rRNA binding proteins, it binds directly to 16S-like rRNA where it nucleates assembly of the head domain of the small subunit. In Dictyostelium citrinum (Slime mold), this protein is Small ribosomal subunit protein uS7m (mrps7).